The following is a 254-amino-acid chain: NAD-dependent protein deacetylase 1 (254 aa).

One can recognise a Deacetylase sirtuin-type domain in the interval alanine 5–asparagine 254. NAD(+) is bound by residues alanine 31, threonine 35, phenylalanine 42, arginine 43, glutamine 108, isoleucine 110, aspartate 111, and histidine 128. Phenylalanine 42 is a binding site for nicotinamide. The nicotinamide site is built by isoleucine 110 and aspartate 111. The Proton acceptor role is filled by histidine 128. Zn(2+) is bound by residues cysteine 136, cysteine 139, cysteine 160, and cysteine 163. Residues serine 201, serine 202, asparagine 226, aspartate 243, and isoleucine 244 each contribute to the NAD(+) site.

This sequence belongs to the sirtuin family. Class U subfamily. It depends on Zn(2+) as a cofactor.

It localises to the cytoplasm. It carries out the reaction N(6)-acetyl-L-lysyl-[protein] + NAD(+) + H2O = 2''-O-acetyl-ADP-D-ribose + nicotinamide + L-lysyl-[protein]. In terms of biological role, NAD-dependent protein deacetylase which modulates the activities of several enzymes which are inactive in their acetylated form. This is NAD-dependent protein deacetylase 1 from Bradyrhizobium diazoefficiens (strain JCM 10833 / BCRC 13528 / IAM 13628 / NBRC 14792 / USDA 110).